The sequence spans 245 residues: MKNRIPVVLLACGSFNPITNMHLRLFEVARDHLHQTGRYQVIEGIISPVNDSYGKKDLVASHHRVAMARLALQTSDWIRVDPWESEQAQWMETVKVLRHHHRELLRSSAQMDGPDPSKTPSASAALPELKLLCGADVLKTFQTPNLWKDTHIQEIVEKFGLVCVSRSGHDPERYISDSPILQQFQHNIHLAREPVLNEISATYVRKALGQGQSVKYLLPEAVITYIRDQGLYINDGSWKGKGKTG.

2 residues coordinate NAD(+): Ser-14 and Phe-15. ATP contacts are provided by His-22 and Lys-56. The NAD(+) site is built by Trp-90, Thr-93, Gly-134, and Asp-136. Residue Lys-139 coordinates ATP. NAD(+) contacts are provided by Leu-146, Trp-147, Arg-166, and Asn-197. 202 to 205 serves as a coordination point for ATP; sequence TYVR.

The protein belongs to the eukaryotic NMN adenylyltransferase family. In terms of assembly, homotetramer. The cofactor is Mg(2+).

Its subcellular location is the mitochondrion. It carries out the reaction beta-nicotinamide D-ribonucleotide + ATP + H(+) = diphosphate + NAD(+). The catalysed reaction is nicotinate beta-D-ribonucleotide + ATP + H(+) = deamido-NAD(+) + diphosphate. It participates in cofactor biosynthesis; NAD(+) biosynthesis; NAD(+) from nicotinamide D-ribonucleotide: step 1/1. Its pathway is cofactor biosynthesis; NAD(+) biosynthesis; deamido-NAD(+) from nicotinate D-ribonucleotide: step 1/1. With respect to regulation, activity is strongly inhibited by galotannin. Inhibited by P1-(adenosine-5')-P4-(nicotinic-acid-riboside-5')-tetraphosphate (Nap4AD). Functionally, catalyzes the formation of NAD(+) from nicotinamide mononucleotide (NMN) and ATP. Can also use the deamidated form; nicotinic acid mononucleotide (NaMN) as substrate with the same efficiency. Can use triazofurin monophosphate (TrMP) as substrate. Can also use GTP and ITP as nucleotide donors. Also catalyzes the reverse reaction, i.e. the pyrophosphorolytic cleavage of NAD(+). For the pyrophosphorolytic activity, can use NAD(+), NADH, NaAD, nicotinic acid adenine dinucleotide phosphate (NHD), nicotinamide guanine dinucleotide (NGD) as substrates. Fails to cleave phosphorylated dinucleotides NADP(+), NADPH and NaADP(+). Protects against axonal degeneration following injury. May be involved in the maintenance of axonal integrity. Also functions as a stress-response chaperone protein that prevents toxic aggregation of proteins; this function may be independent of its NAD(+) synthesis activity. In Mus musculus (Mouse), this protein is Nicotinamide/nicotinic acid mononucleotide adenylyltransferase 3.